The chain runs to 84 residues: Sec-independent protein translocase protein TatA (84 aa).

The chain crosses the membrane as a helical span at residues 1–21 (MGGISIWQLLIIAVIVILLFG). The tract at residues 40-84 (KKAMSDEDKPADKKDADFEPKNIEQQKTEASAETTAETKKDKEQA) is disordered. 2 stretches are compositionally biased toward basic and acidic residues: residues 42-66 (AMSD…EQQK) and 75-84 (AETKKDKEQA).

It belongs to the TatA/E family. The Tat system comprises two distinct complexes: a TatABC complex, containing multiple copies of TatA, TatB and TatC subunits, and a separate TatA complex, containing only TatA subunits. Substrates initially bind to the TatABC complex, which probably triggers association of the separate TatA complex to form the active translocon.

Its subcellular location is the cell inner membrane. Part of the twin-arginine translocation (Tat) system that transports large folded proteins containing a characteristic twin-arginine motif in their signal peptide across membranes. TatA could form the protein-conducting channel of the Tat system. The sequence is that of Sec-independent protein translocase protein TatA from Vibrio atlanticus (strain LGP32) (Vibrio splendidus (strain Mel32)).